Here is a 764-residue protein sequence, read N- to C-terminus: Tyrosine-protein phosphatase corkscrew (764 aa).

The SH2 domain maps to 1–95; the sequence is WFHGNLSGKE…GTVVHLRQPF (95 aa). The region spanning 117–522 is the Tyrosine-protein phosphatase domain; that stretch reads FWEEFESLQQ…KFVYYAVQHY (406 aa). Residues 174 to 325 are PTPase insert (Cys/Ser-rich); that stretch reads IRLPTDGDLY…LNGEGNQFKT (152 aa). Residues 246 to 273 are disordered; sequence SKHKRSESMSASANASAAGTGPGTPTAA. Residues 255–273 show a composition bias toward low complexity; it reads SASANASAAGTGPGTPTAA. Substrate contacts are provided by residues Asp-422, 460-466, and Gln-507; that span reads CSAGIGR. Catalysis depends on Cys-460, which acts as the Phosphocysteine intermediate. The tract at residues 599–666 is disordered; sequence AAKLQPPLPP…NANGNGNILG (68 aa). Over residues 612–666 the composition is skewed to low complexity; sequence SNNNNSSGNSGSYCNSSSSTSTAQHNGVVSSSNNCSSGSGSANSSNANGNGNILG.

The protein belongs to the protein-tyrosine phosphatase family. Non-receptor class subfamily.

It is found in the cytoplasm. It carries out the reaction O-phospho-L-tyrosyl-[protein] + H2O = L-tyrosyl-[protein] + phosphate. Functionally, required in all receptor tyrosine kinase signaling pathways. Functions downstream of the receptor tyrosine kinase torso, acting in concert with D-Raf via tailless. Also functions downstream of Egfr (epidermal growth factor receptor) and btl (fibroblast growth factor receptor). The SH2 domain suggests that csw effects its role by mediating heteromeric protein interactions. Maternally required for normal determination of cell fates at the termini of the embryo. Required for cell fate specification of the ventral ectoderm, in the developing embryonic CNS and for embryonic tracheal cell migration. Functions during imaginal development for proper formation of adult structures such as eyes, aristae, L5 wing vein and the tarsal claw. The sequence is that of Tyrosine-protein phosphatase corkscrew (csw) from Drosophila virilis (Fruit fly).